We begin with the raw amino-acid sequence, 127 residues long: Flagellar assembly factor FliW (127 aa).

Belongs to the FliW family. Interacts with translational regulator CsrA and flagellin(s).

Its subcellular location is the cytoplasm. Functionally, acts as an anti-CsrA protein, binds CsrA and prevents it from repressing translation of its target genes, one of which is flagellin. Binds to flagellin and participates in the assembly of the flagellum. The chain is Flagellar assembly factor FliW from Campylobacter concisus (strain 13826).